The following is a 325-amino-acid chain: MATH domain and coiled-coil domain-containing protein At3g58430 (325 aa).

The 126-residue stretch at 6-131 (HKKFCWIIKN…KGDFKIIAEV (126 aa)) folds into the MATH domain. Residues 258 to 306 (FKVDWLEKKLDQVKDKKEREQSGLARLHELEEYLLKLKQKCSNLDLLVE) adopt a coiled-coil conformation.

In Arabidopsis thaliana (Mouse-ear cress), this protein is MATH domain and coiled-coil domain-containing protein At3g58430.